A 493-amino-acid polypeptide reads, in one-letter code: Probable cytosol aminopeptidase (493 aa).

Residues Lys-265 and Asp-270 each coordinate Mn(2+). The active site involves Lys-277. Residues Asp-288, Asp-347, and Glu-349 each contribute to the Mn(2+) site. Arg-351 is an active-site residue.

Belongs to the peptidase M17 family. The cofactor is Mn(2+).

The protein localises to the cytoplasm. The enzyme catalyses Release of an N-terminal amino acid, Xaa-|-Yaa-, in which Xaa is preferably Leu, but may be other amino acids including Pro although not Arg or Lys, and Yaa may be Pro. Amino acid amides and methyl esters are also readily hydrolyzed, but rates on arylamides are exceedingly low.. It catalyses the reaction Release of an N-terminal amino acid, preferentially leucine, but not glutamic or aspartic acids.. Functionally, presumably involved in the processing and regular turnover of intracellular proteins. Catalyzes the removal of unsubstituted N-terminal amino acids from various peptides. This is Probable cytosol aminopeptidase from Hydrogenovibrio crunogenus (strain DSM 25203 / XCL-2) (Thiomicrospira crunogena).